Here is a 368-residue protein sequence, read N- to C-terminus: DNA replication and repair protein RecF (368 aa).

30–37 contributes to the ATP binding site; the sequence is GDNGAGKT.

Belongs to the RecF family.

Its subcellular location is the cytoplasm. The RecF protein is involved in DNA metabolism; it is required for DNA replication and normal SOS inducibility. RecF binds preferentially to single-stranded, linear DNA. It also seems to bind ATP. This chain is DNA replication and repair protein RecF, found in Xanthomonas euvesicatoria pv. vesicatoria (strain 85-10) (Xanthomonas campestris pv. vesicatoria).